A 147-amino-acid polypeptide reads, in one-letter code: Hordoindoline-B1 (147 aa).

The first 19 residues, 1 to 19 (MKTLFLLAILALVASTTFA), serve as a signal peptide directing secretion. Positions 20–28 (QYSVGGGYN) are excised as a propeptide.

Five disulfide bonds are present. As to expression, found in endosperm and aleurone layer of developing kernels, but not in the embryo.

It is found in the membrane. It localises to the secreted. The protein localises to the extracellular space. In terms of biological role, acts as a membranotoxin, probably through its antibacterial and antifungal activities, contributing to the defense mechanism of the plant against predators. Forms monovalent cation-selective ion channels in membranes. Contributes to grain texture and hardness. The polypeptide is Hordoindoline-B1 (HINB-1) (Hordeum vulgare (Barley)).